Here is a 591-residue protein sequence, read N- to C-terminus: Cytidine monophosphate-N-acetylneuraminic acid hydroxylase (591 aa).

The Rieske domain maps to 12–110 (LEAEDVRNLK…AVLSETDGSL (99 aa)). Positions 52, 54, 73, and 76 each coordinate [2Fe-2S] cluster.

It belongs to the CMP-Neu5Ac hydroxylase family. Requires [2Fe-2S] cluster as cofactor.

The protein resides in the cytoplasm. It catalyses the reaction CMP-N-acetyl-beta-neuraminate + 2 Fe(II)-[cytochrome b5] + O2 + 2 H(+) = CMP-N-glycoloyl-beta-neuraminate + 2 Fe(III)-[cytochrome b5] + H2O. Its pathway is amino-sugar metabolism; N-acetylneuraminate metabolism. Functionally, sialic acids are components of carbohydrate chains of glycoconjugates and are involved in cell-cell recognition and cell-pathogen interactions. Catalyzes the conversion of CMP-N-acetylneuraminic acid (CMP-Neu5Ac) into its hydroxylated derivative CMP-N-glycolylneuraminic acid (CMP-Neu5Gc), a sialic acid abundantly expressed at the surface of many cells. This is Cytidine monophosphate-N-acetylneuraminic acid hydroxylase (cmah) from Danio rerio (Zebrafish).